The sequence spans 313 residues: Probable lysophospholipase L2 (313 aa).

The protein resides in the cell inner membrane. It catalyses the reaction a 1-acyl-sn-glycero-3-phosphocholine + H2O = sn-glycerol 3-phosphocholine + a fatty acid + H(+). In Haemophilus influenzae (strain ATCC 51907 / DSM 11121 / KW20 / Rd), this protein is Probable lysophospholipase L2 (pldB).